An 84-amino-acid polypeptide reads, in one-letter code: Cell division topological specificity factor (84 aa).

The protein belongs to the MinE family.

Functionally, prevents the cell division inhibition by proteins MinC and MinD at internal division sites while permitting inhibition at polar sites. This ensures cell division at the proper site by restricting the formation of a division septum at the midpoint of the long axis of the cell. The protein is Cell division topological specificity factor of Burkholderia mallei (strain NCTC 10247).